The following is a 252-amino-acid chain: Redox-sensing transcriptional repressor Rex (252 aa).

The H-T-H motif DNA-binding region spans 26–65 (LYLRALTALSERSVPTVSSEELAAAAGVNSAKLRKDFSYL). 100–105 (GIGNLG) is a binding site for NAD(+). Residues 222–252 (EAAAEGAIPAAASKESADKGPDGDVPAVMPA) form a disordered region.

The protein belongs to the transcriptional regulatory Rex family. As to quaternary structure, homodimer.

The protein resides in the cytoplasm. Functionally, modulates transcription in response to changes in cellular NADH/NAD(+) redox state. This is Redox-sensing transcriptional repressor Rex from Streptomyces avermitilis (strain ATCC 31267 / DSM 46492 / JCM 5070 / NBRC 14893 / NCIMB 12804 / NRRL 8165 / MA-4680).